Reading from the N-terminus, the 422-residue chain is Gamma-glutamyl phosphate reductase (422 aa).

The protein belongs to the gamma-glutamyl phosphate reductase family.

It localises to the cytoplasm. It carries out the reaction L-glutamate 5-semialdehyde + phosphate + NADP(+) = L-glutamyl 5-phosphate + NADPH + H(+). Its pathway is amino-acid biosynthesis; L-proline biosynthesis; L-glutamate 5-semialdehyde from L-glutamate: step 2/2. Functionally, catalyzes the NADPH-dependent reduction of L-glutamate 5-phosphate into L-glutamate 5-semialdehyde and phosphate. The product spontaneously undergoes cyclization to form 1-pyrroline-5-carboxylate. The sequence is that of Gamma-glutamyl phosphate reductase from Nitrosomonas europaea (strain ATCC 19718 / CIP 103999 / KCTC 2705 / NBRC 14298).